A 491-amino-acid chain; its full sequence is Ribonuclease G (491 aa).

The S1 motif domain occupies 40 to 129 (GNIYKGRVTR…LTTDITLPSR (90 aa)). 2 residues coordinate Mg(2+): Asp305 and Asp348.

It belongs to the RNase E/G family. RNase G subfamily. In terms of assembly, homodimer, in equilibrium with possible higher multimers. It depends on Mg(2+) as a cofactor.

The protein localises to the cytoplasm. Functionally, an endonuclease that acts in the processing of the 5'-end of 16S rRNA and 23S rRNA. It prefers 5'-monophosphorylated substrates and cleaves single-stranded sites rich in A and U residues; contributes to tRNA processing and mRNA turnover. The polypeptide is Ribonuclease G (rng) (Haemophilus influenzae (strain ATCC 51907 / DSM 11121 / KW20 / Rd)).